We begin with the raw amino-acid sequence, 172 residues long: Chorion protein S18 (172 aa).

An N-terminal signal peptide occupies residues 1–17 (MMKFMCICLCAISAVSA).

Belongs to the chorion protein S15/S18 family.

The protein resides in the secreted. Functionally, chorion membrane (egg shell) protein; plays a role in protecting the egg from the environment. The chain is Chorion protein S18 (Cp18) from Drosophila melanogaster (Fruit fly).